The chain runs to 427 residues: Serine hydroxymethyltransferase (427 aa).

(6S)-5,6,7,8-tetrahydrofolate-binding positions include Leu-122 and 126-128; that span reads GHL. At Lys-231 the chain carries N6-(pyridoxal phosphate)lysine. 355 to 357 contacts (6S)-5,6,7,8-tetrahydrofolate; the sequence is SPF.

Belongs to the SHMT family. In terms of assembly, homodimer. Pyridoxal 5'-phosphate is required as a cofactor.

It is found in the cytoplasm. It carries out the reaction (6R)-5,10-methylene-5,6,7,8-tetrahydrofolate + glycine + H2O = (6S)-5,6,7,8-tetrahydrofolate + L-serine. The protein operates within one-carbon metabolism; tetrahydrofolate interconversion. Its pathway is amino-acid biosynthesis; glycine biosynthesis; glycine from L-serine: step 1/1. In terms of biological role, catalyzes the reversible interconversion of serine and glycine with tetrahydrofolate (THF) serving as the one-carbon carrier. This reaction serves as the major source of one-carbon groups required for the biosynthesis of purines, thymidylate, methionine, and other important biomolecules. Also exhibits THF-independent aldolase activity toward beta-hydroxyamino acids, producing glycine and aldehydes, via a retro-aldol mechanism. The sequence is that of Serine hydroxymethyltransferase from Nostoc punctiforme (strain ATCC 29133 / PCC 73102).